A 135-amino-acid chain; its full sequence is MARTKQTARKSTGGKAPRKAVATKARKTAPPVGGVKKPHRFRPGTVALREIRRYQKSTELLIRKLPFQRLVREIAQDFKTDLRFQSAAIAALQEAAEAYLVGLFEDTNLCAIHAKRVTIMPKDIQLARRIRGERA.

The disordered stretch occupies residues 1 to 40 (MARTKQTARKSTGGKAPRKAVATKARKTAPPVGGVKKPHR). The span at 19–31 (KAVATKARKTAPP) shows a compositional bias: low complexity.

The protein belongs to the histone H3 family. The nucleosome is a histone octamer containing two molecules each of H2A, H2B, H3 and H4 assembled in one H3-H4 heterotetramer and two H2A-H2B heterodimers. The octamer wraps approximately 147 bp of DNA.

It localises to the nucleus. It is found in the chromosome. Core component of nucleosome. Nucleosomes wrap and compact DNA into chromatin, limiting DNA accessibility to the cellular machineries which require DNA as a template. Histones thereby play a central role in transcription regulation, DNA repair, DNA replication and chromosomal stability. DNA accessibility is regulated via a complex set of post-translational modifications of histones, also called histone code, and nucleosome remodeling. The sequence is that of Histone H3 from Mastigamoeba balamuthi (Phreatamoeba balamuthi).